A 569-amino-acid polypeptide reads, in one-letter code: Ribonuclease J (569 aa).

Residues His-81, His-83, Asp-85, His-86, His-150, and Asp-172 each coordinate Zn(2+). A substrate-binding site is contributed by 373–377 (HASGH). His-399 contacts Zn(2+).

It belongs to the metallo-beta-lactamase superfamily. RNA-metabolizing metallo-beta-lactamase-like family. Bacterial RNase J subfamily. In terms of assembly, homodimer, may be a subunit of the RNA degradosome. Requires Zn(2+) as cofactor.

The protein localises to the cytoplasm. Its function is as follows. An RNase that has 5'-3' exonuclease and possibly endoonuclease activity. Involved in maturation of rRNA and in some organisms also mRNA maturation and/or decay. This Mycoplasma genitalium (strain ATCC 33530 / DSM 19775 / NCTC 10195 / G37) (Mycoplasmoides genitalium) protein is Ribonuclease J.